The sequence spans 123 residues: Large ribosomal subunit protein uL14 (123 aa).

The protein belongs to the universal ribosomal protein uL14 family. As to quaternary structure, part of the 50S ribosomal subunit. Forms a cluster with proteins L3 and L19. In the 70S ribosome, L14 and L19 interact and together make contacts with the 16S rRNA in bridges B5 and B8.

Its function is as follows. Binds to 23S rRNA. Forms part of two intersubunit bridges in the 70S ribosome. This chain is Large ribosomal subunit protein uL14, found in Tropheryma whipplei (strain TW08/27) (Whipple's bacillus).